The chain runs to 114 residues: T cell receptor beta variable 4-3 (114 aa).

Residues 1–21 (MGCRLLCCAVLCLLGAVPMET) form the signal peptide. Positions 22 to 114 (GVTQTPRHLV…SALYLCASSQ (93 aa)) constitute an Ig-like domain. Residues cysteine 42 and cysteine 110 are joined by a disulfide bond. Asparagine 76 and asparagine 89 each carry an N-linked (GlcNAc...) asparagine glycan.

Alpha-beta TR is a heterodimer composed of an alpha and beta chain; disulfide-linked. The alpha-beta TR is associated with the transmembrane signaling CD3 coreceptor proteins to form the TR-CD3 (TcR or TCR). The assembly of alpha-beta TR heterodimers with CD3 occurs in the endoplasmic reticulum where a single alpha-beta TR heterodimer associates with one CD3D-CD3E heterodimer, one CD3G-CD3E heterodimer and one CD247 homodimer forming a stable octameric structure. CD3D-CD3E and CD3G-CD3E heterodimers preferentially associate with TR alpha and TR beta chains, respectively. The association of the CD247 homodimer is the last step of TcR assembly in the endoplasmic reticulum and is required for transport to the cell surface.

It localises to the cell membrane. Its function is as follows. V region of the variable domain of T cell receptor (TR) beta chain that participates in the antigen recognition. Alpha-beta T cell receptors are antigen specific receptors which are essential to the immune response and are present on the cell surface of T lymphocytes. Recognize peptide-major histocompatibility (MH) (pMH) complexes that are displayed by antigen presenting cells (APC), a prerequisite for efficient T cell adaptive immunity against pathogens. Binding of alpha-beta TR to pMH complex initiates TR-CD3 clustering on the cell surface and intracellular activation of LCK that phosphorylates the ITAM motifs of CD3G, CD3D, CD3E and CD247 enabling the recruitment of ZAP70. In turn ZAP70 phosphorylates LAT, which recruits numerous signaling molecules to form the LAT signalosome. The LAT signalosome propagates signal branching to three major signaling pathways, the calcium, the mitogen-activated protein kinase (MAPK) kinase and the nuclear factor NF-kappa-B (NF-kB) pathways, leading to the mobilization of transcription factors that are critical for gene expression and essential for T cell growth and differentiation. The T cell repertoire is generated in the thymus, by V-(D)-J rearrangement. This repertoire is then shaped by intrathymic selection events to generate a peripheral T cell pool of self-MH restricted, non-autoaggressive T cells. Post-thymic interaction of alpha-beta TR with the pMH complexes shapes TR structural and functional avidity. In Homo sapiens (Human), this protein is T cell receptor beta variable 4-3.